The sequence spans 537 residues: Arginine--tRNA ligase (537 aa).

The short motif at 113-123 (ANPTGRIHLGH) is the 'HIGH' region element.

This sequence belongs to the class-I aminoacyl-tRNA synthetase family. Monomer.

It localises to the cytoplasm. It carries out the reaction tRNA(Arg) + L-arginine + ATP = L-arginyl-tRNA(Arg) + AMP + diphosphate. The polypeptide is Arginine--tRNA ligase (argS) (Mycoplasma genitalium (strain ATCC 33530 / DSM 19775 / NCTC 10195 / G37) (Mycoplasmoides genitalium)).